The following is a 152-amino-acid chain: Aminoglycoside N(6')-acetyltransferase type 1 (152 aa).

The N-acetyltransferase domain maps to 5–152 (PLVRPVETTD…AQVRCFRKPL (148 aa)). Substrate contacts are provided by tryptophan 26, tyrosine 73, glutamate 86, and aspartate 122. An acetyl-CoA-binding site is contributed by asparagine 127.

Homodimer.

The enzyme catalyses kanamycin B + acetyl-CoA = N(6')-acetylkanamycin B + CoA + H(+). In terms of biological role, catalyzes the transfer of an acetyl group from acetyl-CoA to the 6'-amino group of aminoglycoside molecules conferring resistance to antibiotics containing the purpurosamine ring including amikacin. This Klebsiella aerogenes (Enterobacter aerogenes) protein is Aminoglycoside N(6')-acetyltransferase type 1 (aacA7).